Here is a 298-residue protein sequence, read N- to C-terminus: GTPase Era (298 aa).

The Era-type G domain maps to 3 to 170; sequence KSGFVAILGR…VQLLKDNLEE (168 aa). The tract at residues 11–18 is G1; the sequence is GRPNVGKS. 11 to 18 provides a ligand contact to GTP; the sequence is GRPNVGKS. The segment at 37–41 is G2; the sequence is QTTRN. The interval 58–61 is G3; it reads DTPG. Residues 58–62 and 120–123 each bind GTP; these read DTPGI and NKID. Positions 120-123 are G4; that stretch reads NKID. The G5 stretch occupies residues 149–151; sequence ISA. Residues 201–279 form the KH type-2 domain; the sequence is TQQEVPHSVA…YLETWVKVKK (79 aa).

It belongs to the TRAFAC class TrmE-Era-EngA-EngB-Septin-like GTPase superfamily. Era GTPase family. Monomer.

The protein localises to the cytoplasm. Its subcellular location is the cell membrane. Functionally, an essential GTPase that binds both GDP and GTP, with rapid nucleotide exchange. Plays a role in 16S rRNA processing and 30S ribosomal subunit biogenesis and possibly also in cell cycle regulation and energy metabolism. The polypeptide is GTPase Era (Streptococcus equi subsp. equi (strain 4047)).